Reading from the N-terminus, the 224-residue chain is Vesicle transport through interaction with t-SNAREs homolog 1A (224 aa).

Residues 1–199 (MSADFEGYEQ…GMLRRIIQNR (199 aa)) are Cytoplasmic-facing. Coiled coils occupy residues 31-92 (PDEK…KRSR) and 106-185 (DAGN…GKSS). The chain crosses the membrane as a helical; Anchor for type IV membrane protein span at residues 200 to 220 (ILLVILGIIVVITILTAITFF). At 221-224 (VRGH) the chain is on the vesicular side.

This sequence belongs to the VTI1 family. In terms of assembly, interacts with distinct SNARE complexes that contain either STX5 or STX6. Interacts with NAPA and, to a lesser extent, with NAPG. Identified in a complex containing STX6, STX12, VAMP4 and VTI1A. Specifically expressed in the neuronal tissues cerebellum, cortex and hippocampus. Isoform 1/VTI1A is expressed in the same neuronal tissues but also in lung, liver, kidney and spleen.

Its subcellular location is the membrane. The protein resides in the cytoplasmic vesicle. It is found in the secretory vesicle. The protein localises to the synaptic vesicle membrane. It localises to the clathrin-coated vesicle membrane. Its subcellular location is the golgi apparatus membrane. Functionally, V-SNARE that mediates vesicle transport pathways through interactions with t-SNAREs on the target membrane. These interactions are proposed to mediate aspects of the specificity of vesicle trafficking and to promote fusion of the lipid bilayers. Involved in vesicular transport from the late endosomes to the trans-Golgi network. Along with VAMP7, involved in an non-conventional RAB1-dependent traffic route to the cell surface used by KCNIP1 and KCND2. May be concerned with increased secretion of cytokines associated with cellular senescence. The sequence is that of Vesicle transport through interaction with t-SNAREs homolog 1A (Vti1a) from Rattus norvegicus (Rat).